Here is a 447-residue protein sequence, read N- to C-terminus: Tubulin beta-4 chain (447 aa).

GTP is bound by residues Q11, E69, S138, G142, T143, G144, N204, and N226. A Mg(2+)-binding site is contributed by E69. The interval 423-447 (QQYQDATADEEGEYEDEEQQEADDM) is disordered. Residues 429-447 (TADEEGEYEDEEQQEADDM) show a composition bias toward acidic residues.

This sequence belongs to the tubulin family. Dimer of alpha and beta chains. A typical microtubule is a hollow water-filled tube with an outer diameter of 25 nm and an inner diameter of 15 nM. Alpha-beta heterodimers associate head-to-tail to form protofilaments running lengthwise along the microtubule wall with the beta-tubulin subunit facing the microtubule plus end conferring a structural polarity. Microtubules usually have 13 protofilaments but different protofilament numbers can be found in some organisms and specialized cells. Requires Mg(2+) as cofactor. Expressed in roots and leaf sheaths.

Its subcellular location is the cytoplasm. It localises to the cytoskeleton. Its function is as follows. Tubulin is the major constituent of microtubules, a cylinder consisting of laterally associated linear protofilaments composed of alpha- and beta-tubulin heterodimers. Microtubules grow by the addition of GTP-tubulin dimers to the microtubule end, where a stabilizing cap forms. Below the cap, tubulin dimers are in GDP-bound state, owing to GTPase activity of alpha-tubulin. The sequence is that of Tubulin beta-4 chain (TUBB4) from Oryza sativa subsp. japonica (Rice).